The chain runs to 972 residues: Leucine--tRNA ligase (972 aa).

The 'HIGH' region motif lies at 78–89 (PYPSGDGLHVGH). Residues 741-745 (KIGKS) carry the 'KMSKS' region motif. K744 is a binding site for ATP.

This sequence belongs to the class-I aminoacyl-tRNA synthetase family.

It is found in the cytoplasm. It catalyses the reaction tRNA(Leu) + L-leucine + ATP = L-leucyl-tRNA(Leu) + AMP + diphosphate. In Mycobacterium leprae (strain Br4923), this protein is Leucine--tRNA ligase.